The following is a 2957-amino-acid chain: MKGIEGVIMLSHDILPEKLLVSEKKHENVGSYFSDDIGEQSEQTEVSHFNLSLDDAFDIYADISIENQQELKNKDNNTNIWSSLGRGDDDHNLKKIINDAFKEKLPQLMEYRRKGYNVIGLDKEGIKKLEGMLKAVPPEIQQPTMKNLYSAAQELLNTLKQHPLLPENQDMIQQSNLVIRNLSDALEAINAVSKVNQVEWWEEVHKTNKAQSDRLIAATLEELFFKVKDKRLPGSNDDYCQQEREETERKIKDLLLYDGYQLTAEHFKFGRLRKSLLAESRVTRLKLAEYLEKKSVGILTAARDAKMYAMKILLAQTRNNGFNAKDLINAGQVNDRLLSFQQYARHIRAVDGEIDGIILSNPLVVACIKETNDEPAHIKIARAILPVSEELGTVSKVLRETKEKVQPSKPKEELNHPHQDWWNRGDELWKYIKKTSWNIKETSVHVTQMVGYEASKTASRAKHKLKESSYSESINGAVKGTALLLLDEIQQAENRIRQIPQFAWDVQEAVEQHSSVIQRTAYPDELPELSELLNEQLKHEEARWQAVKKQSRDKLQELIAPITRLAQEKWAQDLYFQLGEELRKERQDRWKDIQQFDEIMAEAVGQFAEMARELDSEAVRLAEHGHSGGKELQEKVAKWLRDLSKLKGKVKAGVAKITGTSLDNFSRSGMLARGMSEWAEDLKQSYLQETLQEGSAVAAELFERTLMEVVEENRTHFAKESDPEAERFLKRLALALKHAAENTTVYPPTPEEILAGSRSLPEDIRHWAEKKVVSGAISAAFRGGFKLVTGTFSLPVRVVIRGAKTGGTLYRGVRAINRSVRLGQGPATQVKSKFINQELSKTAFRLTLSLSPLVAWGMAASITAGRLYNEKDYPEKIIKNIVIDLPEELLWIGGYAGINAAIRAHAEKAIQQAIQHALDEQADKLALRINKEIAGKSADVNVEIIPQETSVSPAETAQSTPEPLSDFASTSQLTMPELIDIQDNNSAQQPKVRRKRDVSVESEISIDNLNIINANTREDKVNSEIKSELRSELKRFENSDANSPMSDVERAIFIDLFLYKNKYEVSESQQDYKNTWLKFRRELESQENKEIKEYLRFRSIIEAYEIYDKKRLDDDTIPEAGTIIKEVIDFFQKLKKENPITFMKLAEAMVKFQYYYEEEDENEDRYFKMAEIYYFLNKTENEKKSKTFHLDIIDKYPNENNRLLDEFFLNKNNNNPDLDEIIYKLQSMQEKYRESYEMLSKVENIHQVLSDDSKNEENIFLDNRIIAAQVFDGSINISLQDKKKWLNRYDQIRNEEGSDGWKLMHIESILINLRRINTAINLTAMKSESALLLIDKLLNFQKKARENILHISETPHEDFTSYSQFKTRKELGNDDSKYYAQFDNYKDNHDAEKEAKEILSQVVARASLSFSELFDKVESIKLFSFVYKNRDGGAPLAAPGRTVVIKFPGKDTGGLVISNLFLRNHVKRISTKEMEDLKPLTEGMYTRATQHRSLGSYYHIGSQSEHTNALEILSGMNKEELKTHLKKQGIWFGEPALFSNEYPKQENTGHLENTTLKNAIIGVSTIQNNAAANYLRSTMYESTGWEKLGDRFIPFYEIGRRKHYDREYEINSEQLTLDIITSIAIAYPAARGIVATIRSSAIPSILKSGLRGSALFKSLSLELGKMGFNASKVFGGAVYELIEPYPINSHLNRHNVFNKVKDTAWEFHTDVGLKGGGLKDFIDRFTKEPKEITISGYKFKRIKYNQENFDTMQRMALDYAYNPDSKGKIAQAQQAYKTGKEDYNAPQYDNFNGLSLDKKIERYISPDTDATTKGVLAGKMNESIKDINAFQTAKDAQSWKKSANKANKVVLTPQNLYLKGKPSECLPESVLMGWALQSSQDAKLSKMLMGIYSSNDITSNPLYKSLKELHANGNASKFNASATSISNINVSNLATSETKLFPTEISSVRVDAPKHTMLISKIKNRENKIKYVFYDPNYGMAYFDKHSDMAAFFQKKMQQYDFPDDSVSFHPLDYSNVSDIKISGRNLNEIIDGEIPLLYKQEGVQLEGITPRDGIYRVPPKNTLGVQETKHYIIVNNDIYQVEWDQTNNTWRVFDPSNTNRSRPTVPVKQDTNGEWFKHSETGLKGGGPIDDIRKYIARKSAIKIFNQSINYSATKWPPEPIDKNIHMIWIGTKNISEKNIKLSIDTAKKNPDYNTSIIYDSGISGHEGAKKFMLEKFQDSNVNIIDFRKKSYFSQLKQEPSFAYYEQVIAENKYAQASDILRLLVLKYEGGIYKDIDDIQVKGFGSLTFPKGIGVMREYAPEAGKATAFPNTPIAVTKNNPIINKTLDLAVSNYQRGEKNVLKLAGPDVFTQALYQEIPGLDSKVLNAQLYQLELAKRQALGVPLEKPKNFADEQLTSAEKEKINRPYQSIRGLSGYVENGADHSWAVDTNIPSTSTQTSTIVTPLAPKTEMLPPVPSSSTKSSTSAPVLQEKISYNLATDIDATDYLNQLKQKTNINNKISSPAGQCESLMKPVSDFMRENGFTDIRYRGMFIWNNATEQIPMNHFVVVGKKVGKDYVFDVSAHQFENKGMPDLNGPLILAAEDWAKKYRGATTRKLIYYSDFKNASTATNTYNALPRELVLESMEGKTFITSPNWYQTFKRTHNIHPEVTVSDPATFSLNYSVNPTAENLSPPPPPPIPSHGQVPKTVTPPPPPMRSPLSLSQPLERLPANKTKPIGFNPGENKASFSKLEEAGKHYYKDDKSRQAAPVNTMSDFDNRYLSHTTEAPAPSNVAHLAPGNIYNTKVTAKGAEKPAYDIYISKDGESLITSSSYKVDDITTDSKFGKPLPYSEIMFNSLKKSGVDPKNLKRSVQASIENKVTQDVISAIGTRIQRGQVIRVSPTENPDAFYTLLGTDNCKATLHMLNQHAEEFGHKVVTSIEFKGTGYLVMNIGTSTQTSTIVTPPPMPGTSQLVQ.

The segment at 949 to 968 (TSVSPAETAQSTPEPLSDFA) is disordered. Positions 2115–2144 (EWFKHSETGLKGGGPIDDIRKYIARKSAIK) are membrane localization domain that interacts with the inner leaflet of the plasma membrane. Residues 2115–2449 (EWFKHSETGL…TSTIVTPLAP (335 aa)) form a tyrosine glycosyltransferase PaToxG region. UDP-N-acetyl-alpha-D-glucosamine-binding positions include 2169–2171 (IWI) and 2259–2260 (SD). A divalent metal cation contacts are provided by Asp-2276 and Asp-2278. The short motif at 2276–2279 (DIDD) is the DxDD motif element. Asn-2312 is a binding site for UDP-N-acetyl-alpha-D-glucosamine. Residues 2450 to 2672 (KTEMLPPVPS…NYSVNPTAEN (223 aa)) form a sseI-like deamidase PaToxD region. Catalysis depends on for deamidase activity residues Cys-2509, His-2547, and Asp-2562. The tract at residues 2667–2705 (NPTAENLSPPPPPPIPSHGQVPKTVTPPPPPMRSPLSLS) is disordered.

Requires a divalent metal cation as cofactor.

It localises to the secreted. The protein resides in the host cell membrane. It catalyses the reaction L-tyrosyl-[protein] + UDP-N-acetyl-alpha-D-glucosamine = O-(N-acetyl-alpha-D-glucosaminyl)-L-tyrosyl-[protein] + UDP + H(+). It carries out the reaction L-glutaminyl-[protein] + H2O = L-glutamyl-[protein] + NH4(+). In terms of biological role, toxin that acts on host cells by modifying Rho proteins by tyrosine GlcNAcylation and heterotrimeric G alpha proteins by deamidation. Catalyzes the mono-O-GlcNAcylation of small GTPases of the Rho family (RhoA, RhoB, RhoC, Rac1, Rac2, Rac3, Cdc42) in eukaryotic host cells at the conserved tyrosine residue located in the switch I region (Tyr-32/34), using UDP-N-acetylglucosamine (UDP-GlcNAc) as the sugar donor; other GTPases of the Rho, Ras or Rab families are not substrates. Tyrosine glycosylation inhibits Rho activation and prevents interaction with downstream effectors, resulting in actin disassembly, inhibition of phagocytosis, cell rounding, and toxicity toward insects and mammalian cells. Also catalyzes the deamidation of the catalytic glutamine in heterotrimeric G alpha proteins (Gi, Gq/11), which blocks GTP hydrolysis and arrests the G proteins in a permanent active state leading to activation of Rho GTPases. Thus, PaTox hijacks host GTPase signaling in a bidirectional manner by deamidation-induced activation and glycosylation-induced inactivation of GTPases. This Photorhabdus asymbiotica subsp. asymbiotica (strain ATCC 43949 / 3105-77) (Xenorhabdus luminescens (strain 2)) protein is Toxin PAU_02230.